Consider the following 482-residue polypeptide: tRNA-2-methylthio-N(6)-dimethylallyladenosine synthase (482 aa).

The region spanning 3–120 (KKLHIKTWGC…LPEMIKQVQG (118 aa)) is the MTTase N-terminal domain. [4Fe-4S] cluster-binding residues include C12, C49, C83, C158, C162, and C165. The region spanning 144–376 (KADGPSAFVS…QNRITQMAQQ (233 aa)) is the Radical SAM core domain. The TRAM domain maps to 379-442 (RQMFDTEQRI…PNSLRGDLIR (64 aa)).

The protein belongs to the methylthiotransferase family. MiaB subfamily. As to quaternary structure, monomer. Requires [4Fe-4S] cluster as cofactor.

The protein localises to the cytoplasm. The catalysed reaction is N(6)-dimethylallyladenosine(37) in tRNA + (sulfur carrier)-SH + AH2 + 2 S-adenosyl-L-methionine = 2-methylsulfanyl-N(6)-dimethylallyladenosine(37) in tRNA + (sulfur carrier)-H + 5'-deoxyadenosine + L-methionine + A + S-adenosyl-L-homocysteine + 2 H(+). In terms of biological role, catalyzes the methylthiolation of N6-(dimethylallyl)adenosine (i(6)A), leading to the formation of 2-methylthio-N6-(dimethylallyl)adenosine (ms(2)i(6)A) at position 37 in tRNAs that read codons beginning with uridine. This chain is tRNA-2-methylthio-N(6)-dimethylallyladenosine synthase, found in Pseudoalteromonas translucida (strain TAC 125).